The chain runs to 1099 residues: Carbamoyl phosphate synthase large chain (1099 aa).

Positions 1–402 (MPKREDIKRI…ALGKALRSLE (402 aa)) are carboxyphosphate synthetic domain. The ATP site is built by arginine 129, arginine 169, glycine 175, glycine 176, glutamate 208, valine 210, glutamate 215, glycine 241, isoleucine 242, histidine 243, glutamine 285, and glutamate 299. The region spanning 133 to 328 (KETMEKAGLE…IAKVAALLAV (196 aa)) is the ATP-grasp 1 domain. Mg(2+) contacts are provided by glutamine 285, glutamate 299, and asparagine 301. Mn(2+) contacts are provided by glutamine 285, glutamate 299, and asparagine 301. The tract at residues 403–541 (LDAAPKLDLE…STYNGVENEA (139 aa)) is oligomerization domain. The carbamoyl phosphate synthetic domain stretch occupies residues 542–944 (VPSDREKIMI…AFAKAQIAAG (403 aa)). Residues 666–857 (AKLLKQIGLK…VARIAAKIMV (192 aa)) enclose the ATP-grasp 2 domain. ATP contacts are provided by arginine 702, lysine 741, leucine 743, glutamate 748, glycine 773, valine 774, histidine 775, serine 776, glutamine 816, and glutamate 828. Mg(2+) is bound by residues glutamine 816, glutamate 828, and asparagine 830. Mn(2+)-binding residues include glutamine 816, glutamate 828, and asparagine 830. Residues 945–1099 (NPLPTTGAIL…VRRLTDTWKM (155 aa)) enclose the MGS-like domain. Residues 945-1099 (NPLPTTGAIL…VRRLTDTWKM (155 aa)) form an allosteric domain region.

The protein belongs to the CarB family. Composed of two chains; the small (or glutamine) chain promotes the hydrolysis of glutamine to ammonia, which is used by the large (or ammonia) chain to synthesize carbamoyl phosphate. Tetramer of heterodimers (alpha,beta)4. The cofactor is Mg(2+). It depends on Mn(2+) as a cofactor.

The enzyme catalyses hydrogencarbonate + L-glutamine + 2 ATP + H2O = carbamoyl phosphate + L-glutamate + 2 ADP + phosphate + 2 H(+). It carries out the reaction hydrogencarbonate + NH4(+) + 2 ATP = carbamoyl phosphate + 2 ADP + phosphate + 2 H(+). Its pathway is amino-acid biosynthesis; L-arginine biosynthesis; carbamoyl phosphate from bicarbonate: step 1/1. It participates in pyrimidine metabolism; UMP biosynthesis via de novo pathway; (S)-dihydroorotate from bicarbonate: step 1/3. Its function is as follows. Large subunit of the glutamine-dependent carbamoyl phosphate synthetase (CPSase). CPSase catalyzes the formation of carbamoyl phosphate from the ammonia moiety of glutamine, carbonate, and phosphate donated by ATP, constituting the first step of 2 biosynthetic pathways, one leading to arginine and/or urea and the other to pyrimidine nucleotides. The large subunit (synthetase) binds the substrates ammonia (free or transferred from glutamine from the small subunit), hydrogencarbonate and ATP and carries out an ATP-coupled ligase reaction, activating hydrogencarbonate by forming carboxy phosphate which reacts with ammonia to form carbamoyl phosphate. This chain is Carbamoyl phosphate synthase large chain, found in Thermotoga petrophila (strain ATCC BAA-488 / DSM 13995 / JCM 10881 / RKU-1).